Consider the following 237-residue polypeptide: Ribosomal RNA small subunit methyltransferase G (237 aa).

S-adenosyl-L-methionine-binding positions include Gly-78, Phe-83, 129-130 (AE), and Arg-148.

This sequence belongs to the methyltransferase superfamily. RNA methyltransferase RsmG family.

The protein resides in the cytoplasm. Its function is as follows. Specifically methylates the N7 position of a guanine in 16S rRNA. The protein is Ribosomal RNA small subunit methyltransferase G of Streptococcus pyogenes serotype M1.